The following is a 530-amino-acid chain: MELEAYIQSLGLGIESYSQSATQFHDEANQSFNIPISTIIKLKEACRELETSKVVAKSLNWSHLLRVISLLWEKDVSLELMKLLANCLRQVPSISVQIVHNESLKQLTTSVFEVRAPKVLSLISTFNDDLERRVVFMRFLFILLSTQTDDICLDMRQVRTQLIQMLKKMWTLNSSPSNNSQDNEMVLTEILRLLFPISKRSYLKEEDEQKILLLVIEIWASSLNNNPNSPLRWHATNALLSFNLQLLSLDQAIYVSEIACQTLQSILISREVEYLEKGLNLCFDIAAKYQNTLPPILAILLSLLSFFNIKQNLSMLLFPTNDDRKQSLQKGKSFRCLLLRLLTIPIVEPIGTYYASLLNELCDGDSQQIARIFGAGYAMGISQHSETMPFPSPLSKAASPVFQKNSRGQENTEENNLAIDPITGSMCTNRNKSQRLELSQEEKEREAERLFYLFQRLEKNSTIQVTNPIQQAVNSGFIDVVFCLIFQMSSESFIYHCYHSFVGPIHILLLMFSTFKFHEILHFIKISKAS.

The chain crosses the membrane as a helical span at residues 492 to 512; sequence SFIYHCYHSFVGPIHILLLMF.

The protein belongs to the synembryn family.

It is found in the membrane. Functionally, chaperone that specifically binds and folds some, but not all, nascent G alpha proteins prior to G protein heterotrimer formation, promoting their stability and activity. Also acts as a guanine nucleotide exchange factor (GEF) for G alpha proteins by stimulating exchange of bound GDP for free GTP. The polypeptide is Synembryn-like chaperone C3E7.04c (Schizosaccharomyces pombe (strain 972 / ATCC 24843) (Fission yeast)).